A 61-amino-acid chain; its full sequence is Truncated Cytokine response-modifying protein B (61 aa).

In terms of biological role, the protein is truncated in this strain and presumably inactive. It has similarities with variola virus CrmB, but the product is inactivated due to several premature stop codon. The sequence is that of Truncated Cytokine response-modifying protein B from Bos taurus (Bovine).